Consider the following 424-residue polypeptide: Enolase (424 aa).

Residue Q163 coordinates (2R)-2-phosphoglycerate. E205 (proton donor) is an active-site residue. Residues D242, E285, and D312 each coordinate Mg(2+). (2R)-2-phosphoglycerate is bound by residues K337, R366, S367, and K388. The active-site Proton acceptor is the K337.

The protein belongs to the enolase family. The cofactor is Mg(2+).

The protein resides in the cytoplasm. The protein localises to the secreted. It is found in the cell surface. It catalyses the reaction (2R)-2-phosphoglycerate = phosphoenolpyruvate + H2O. The protein operates within carbohydrate degradation; glycolysis; pyruvate from D-glyceraldehyde 3-phosphate: step 4/5. Catalyzes the reversible conversion of 2-phosphoglycerate (2-PG) into phosphoenolpyruvate (PEP). It is essential for the degradation of carbohydrates via glycolysis. This Dinoroseobacter shibae (strain DSM 16493 / NCIMB 14021 / DFL 12) protein is Enolase.